We begin with the raw amino-acid sequence, 157 residues long: Transcription elongation factor GreB (157 aa).

Residues Lys52–Arg73 are a coiled coil.

It belongs to the GreA/GreB family. GreB subfamily.

Its function is as follows. Necessary for efficient RNA polymerase transcription elongation past template-encoded arresting sites. The arresting sites in DNA have the property of trapping a certain fraction of elongating RNA polymerases that pass through, resulting in locked ternary complexes. Cleavage of the nascent transcript by cleavage factors such as GreA or GreB allows the resumption of elongation from the new 3'terminus. GreB releases sequences of up to 9 nucleotides in length. This Pseudomonas syringae pv. tomato (strain ATCC BAA-871 / DC3000) protein is Transcription elongation factor GreB.